We begin with the raw amino-acid sequence, 356 residues long: Carbamoyl phosphate synthase small chain (356 aa).

The CPSase stretch occupies residues 1–160 (MKGYLKLEDG…TKKPYRIAGI (160 aa)). Residues Ser45, Gly211, and Gly213 each coordinate L-glutamine. Residues 163-350 (KLAFIDLGTK…MDIVMVYKRR (188 aa)) enclose the Glutamine amidotransferase type-1 domain. The Nucleophile role is filled by Cys238. Leu239, Gln242, Asn280, Gly282, and Tyr283 together coordinate L-glutamine. Residues His323 and Glu325 contribute to the active site.

This sequence belongs to the CarA family. In terms of assembly, composed of two chains; the small (or glutamine) chain promotes the hydrolysis of glutamine to ammonia, which is used by the large (or ammonia) chain to synthesize carbamoyl phosphate. Tetramer of heterodimers (alpha,beta)4.

The enzyme catalyses hydrogencarbonate + L-glutamine + 2 ATP + H2O = carbamoyl phosphate + L-glutamate + 2 ADP + phosphate + 2 H(+). It carries out the reaction L-glutamine + H2O = L-glutamate + NH4(+). The protein operates within amino-acid biosynthesis; L-arginine biosynthesis; carbamoyl phosphate from bicarbonate: step 1/1. It participates in pyrimidine metabolism; UMP biosynthesis via de novo pathway; (S)-dihydroorotate from bicarbonate: step 1/3. In terms of biological role, small subunit of the glutamine-dependent carbamoyl phosphate synthetase (CPSase). CPSase catalyzes the formation of carbamoyl phosphate from the ammonia moiety of glutamine, carbonate, and phosphate donated by ATP, constituting the first step of 2 biosynthetic pathways, one leading to arginine and/or urea and the other to pyrimidine nucleotides. The small subunit (glutamine amidotransferase) binds and cleaves glutamine to supply the large subunit with the substrate ammonia. The protein is Carbamoyl phosphate synthase small chain of Caldanaerobacter subterraneus subsp. tengcongensis (strain DSM 15242 / JCM 11007 / NBRC 100824 / MB4) (Thermoanaerobacter tengcongensis).